The sequence spans 841 residues: Homeobox-leucine zipper protein ATHB-9 (841 aa).

Positions 1–18 are enriched in basic and acidic residues; sequence MMAHHSMDDRDSPDKGFD. The tract at residues 1–21 is disordered; it reads MMAHHSMDDRDSPDKGFDSGK. The segment at residues 18–81 is a DNA-binding region (homeobox); the sequence is DSGKYVRYTP…NRRCREKQRK (64 aa). The stretch at 85 to 118 forms a coiled coil; the sequence is RLQTVNRKLSAMNKLLMEENDRLQKQVSNLVYEN. Disordered stretches follow at residues 140 to 162 and 602 to 630; these read VVVSGQQRQQQNPTHQHPQRDVN and DQKTNPNDHQSASRTRDLASSLDGSTKTD. Over residues 145–155 the composition is skewed to low complexity; it reads QQRQQQNPTHQ. Residues 160-388 enclose the START domain; sequence DVNNPANLLS…IAQETSGEVQ (229 aa). Polar residues predominate over residues 603–614; that stretch reads QKTNPNDHQSAS.

The protein belongs to the HD-ZIP homeobox family. Class III subfamily. In terms of assembly, binds DNA as homodimer. Interacts with ESR1 and ESR2. Interacts with ZPR3.

The protein localises to the nucleus. Probable transcription factor involved in the determination of adaxial-abaxial polarity in ovule primordium. Specifies adaxial leaf fates. Binds to the DNA sequence 5'-GTAAT[GC]ATTAC-3'. This is Homeobox-leucine zipper protein ATHB-9 (ATHB-9) from Arabidopsis thaliana (Mouse-ear cress).